The primary structure comprises 622 residues: Fanconi anemia group G protein (622 aa).

A Phosphoserine modification is found at Ser-7. TPR repeat units follow at residues 246 to 279 (VQVY…GSAW), 344 to 377 (SQTK…LLDS), 453 to 486 (SATH…LFRA), and 514 to 547 (AAAL…CPGN).

Belongs to the multisubunit FA complex composed of FANCA, FANCB, FANCC, FANCE, FANCF, FANCG, FANCL/PHF9 and FANCM. The complex is not found in FA patients. In complex with FANCF, FANCA and FANCL, but not with FANCC, nor FANCE, interacts with HES1; this interaction may be essential for the stability and nuclear localization of FA core complex proteins. The complex with FANCC and FANCG may also include EIF2AK2 and HSP70. When phosphorylated at Ser-7, forms a complex with BRCA2, FANCD2 and XRCC3. As to expression, highly expressed in testis and thymus. Found in lymphoblasts.

The protein resides in the nucleus. Its subcellular location is the cytoplasm. In terms of biological role, DNA repair protein that may operate in a postreplication repair or a cell cycle checkpoint function. May be implicated in interstrand DNA cross-link repair and in the maintenance of normal chromosome stability. Candidate tumor suppressor gene. The protein is Fanconi anemia group G protein (FANCG) of Homo sapiens (Human).